The following is a 225-amino-acid chain: CRISPR pre-crRNA endoribonuclease Cas5d (225 aa).

The protein belongs to the CRISPR-associated protein Cas5 family. Subtype I-C/Dvulg subfamily. It depends on Does not require a metal cofactor. as a cofactor.

Its function is as follows. CRISPR (clustered regularly interspaced short palindromic repeat) is an adaptive immune system that provides protection against mobile genetic elements (viruses, transposable elements and conjugative plasmids). CRISPR clusters contain spacers, sequences complementary to antecedent mobile elements, and target invading nucleic acids. CRISPR clusters are transcribed and processed into CRISPR RNA (crRNA). This protein is a sequence-specific endonuclease that cleaves pre-crRNA at G21 into mature crRNA. Does not cleave pre-crRNA associated with the T.thermophilus strain HB27 Cas5 protein (AC Q746C2) CRISPR locus. The reaction mechanism may proceed by an intramolecular attack of the 2'-hydroxyl group of G21 on the scissile phosphodiester, cutting the precursor 3' to G21 residue yielding 5'-hydroxyl and 2' and/or 3' ends lacking a hydroxyl group (perhaps a 2'/3' cyclic phosphodiester). In Mannheimia succiniciproducens (strain KCTC 0769BP / MBEL55E), this protein is CRISPR pre-crRNA endoribonuclease Cas5d.